The primary structure comprises 578 residues: Vacuolar protein 8 (578 aa).

Glycine 2 carries N-myristoyl glycine lipidation. S-palmitoyl cysteine attachment occurs at residues cysteine 4, cysteine 5, and cysteine 7. 2 positions are modified to phosphoserine: serine 11 and serine 16. ARM repeat units lie at residues 37–75, 76–114, 116–155, 157–196, 198–237, 239–280, 282–321, 323–363, and 407–446; these read DKDQLDFYSGGPLKALTTLVYSDNLNLQRSAALAFAEIT, EKYVRQVSREVLEPILILLQSQDPQIQVAACAALGNLAV, NENKLLIVEMGGLEPLINQMMGDNVEVQCNAVGCITNLAT, DDNKHKIATSGALIPLTKLAKSKHIRVQRNATGALLNMTH, EENRKELVNAGAVPVLVSLLSSTDPDVQYYCTTALSNIAV, EANR…NLAS, TSYQLEIVRAGGLPHLVKLIQSDSIPLVLASVACIRNISI, PLNE…NLAA, and DVSKLDLLEANILDALIPMTFSQNQEVSGNAAAALANLCS. Lysine 77 participates in a covalent cross-link: Glycyl lysine isopeptide (Lys-Gly) (interchain with G-Cter in ubiquitin). Residue lysine 515 forms a Glycyl lysine isopeptide (Lys-Gly) (interchain with G-Cter in ubiquitin) linkage. The segment at 527–557 is disordered; it reads SGIDVKNPGSNNNPSSNDNNSNNNDTGSEHQ. A compositionally biased stretch (low complexity) spans 533–552; it reads NPGSNNNPSSNDNNSNNNDT.

The protein belongs to the beta-catenin family. As to quaternary structure, interacts with NVJ1. Forms heterotetramers of two VAC8 and two NVJ1 or two VAC8 and two ATG13. Post-translationally, palmitoylated on one or more of its N-terminal cysteine residues by PFA3, which is required for vacuole fusion.

The protein localises to the vacuole membrane. Its function is as follows. Functions in both vacuole inheritance and protein targeting from the cytoplasm to vacuole (cvt). Involved in the formation of nucleus-vacuole junctions (NVJs) during piecemeal microautophagy of the nucleus (PMN). NVJs are interorganelle interfaces mediated by NVJ1 in the nuclear envelope and VAC8 on the vacuole membrane. Together, NVJ1 and VAC8 form Velcro-like patches through which teardrop-like portions of the nucleus are pinched off into the vacuolar lumen and degraded by the PMN process. The chain is Vacuolar protein 8 (VAC8) from Saccharomyces cerevisiae (strain ATCC 204508 / S288c) (Baker's yeast).